Here is a 294-residue protein sequence, read N- to C-terminus: NAD kinase (294 aa).

D73 (proton acceptor) is an active-site residue. Residues 73–74 (DG), 147–148 (ND), R175, D177, and 188–193 (TAYALS) each bind NAD(+).

Belongs to the NAD kinase family. It depends on a divalent metal cation as a cofactor.

Its subcellular location is the cytoplasm. It carries out the reaction NAD(+) + ATP = ADP + NADP(+) + H(+). In terms of biological role, involved in the regulation of the intracellular balance of NAD and NADP, and is a key enzyme in the biosynthesis of NADP. Catalyzes specifically the phosphorylation on 2'-hydroxyl of the adenosine moiety of NAD to yield NADP. The protein is NAD kinase of Nitrosospira multiformis (strain ATCC 25196 / NCIMB 11849 / C 71).